Here is a 296-residue protein sequence, read N- to C-terminus: L-isoleucine 3(1)-dioxygenase (296 aa).

Fe cation contacts are provided by H176, D178, and H267.

The protein belongs to the iron/ascorbate-dependent oxidoreductase family. L-ascorbate serves as cofactor. The cofactor is Fe(2+).

The catalysed reaction is L-isoleucine + 2-oxoglutarate + O2 = 3(1)-hydroxy-L-isoleucine + succinate + CO2. Catalyzes the hydroxylation of L-isoleucine at the C-4' position to form L-4'-hydroxyisoleucine (4'-HIL). Exhibits low activity with L-valine and L-methionine. The polypeptide is L-isoleucine 3(1)-dioxygenase (Pantoea ananatis (strain AJ13355)).